Consider the following 276-residue polypeptide: Tyrosinase (276 aa).

The Cu cation site is built by histidine 38, histidine 56, histidine 66, histidine 193, histidine 197, and histidine 219.

The protein belongs to the tyrosinase family. Cu(2+) serves as cofactor.

The catalysed reaction is 2 L-dopa + O2 = 2 L-dopaquinone + 2 H2O. The enzyme catalyses L-tyrosine + O2 = L-dopaquinone + H2O. Its function is as follows. This is a copper-containing oxidase that functions in the formation of pigments such as melanins and other polyphenolic compounds. This Streptomyces galbus protein is Tyrosinase (melC2).